We begin with the raw amino-acid sequence, 429 residues long: MQVLIIGSGGREHALAWKVAQNPQVDTIYVAPGNAGTALEHKVQNVNIGITDIPALVAFAQDKAIELTIVGPEAPLVIGVVDAFRAAGLPIFGPTQGAAQLEGSKAFTKDFLARHNIPTAAYANFTEIEPALAYVREKGAPIVVKADGLAAGKGVIVAMTLQEAEDAIQDMLAGNAFGSAGSRVVVEEFLDGEEASFIVMVDGENVLPMATSQDHKRVGDADTGPNTGGMGAYSPAPVVTQDVHDRVMREVIDPTVRGMAAEGNTYTGFLYAGLMIDSTGAPKVIEYNCRFGDPETQPIMMRLQSDLVELCQAAIAGKLDQVESKWDPRASIGVVLAAGGYPGDYAKGEVISGLPTQESAGQKVFHAGTETQGDQVVTNGGRVLCATALGNTVLEAQQRAYQLADQIHWNGMFCRRDIGYRAIAREQAK.

The ATP-grasp domain maps to 109-316 (KDFLARHNIP…LVELCQAAIA (208 aa)). Position 135 to 196 (135 to 196 (VREKGAPIVV…EEFLDGEEAS (62 aa))) interacts with ATP. Mg(2+)-binding residues include E286 and N288.

The protein belongs to the GARS family. The cofactor is Mg(2+). Mn(2+) is required as a cofactor.

It catalyses the reaction 5-phospho-beta-D-ribosylamine + glycine + ATP = N(1)-(5-phospho-beta-D-ribosyl)glycinamide + ADP + phosphate + H(+). Its pathway is purine metabolism; IMP biosynthesis via de novo pathway; N(1)-(5-phospho-D-ribosyl)glycinamide from 5-phospho-alpha-D-ribose 1-diphosphate: step 2/2. This chain is Phosphoribosylamine--glycine ligase, found in Vibrio cholerae serotype O1 (strain ATCC 39315 / El Tor Inaba N16961).